A 326-amino-acid chain; its full sequence is DNA-directed RNA polymerase subunit alpha (326 aa).

Residues 1-231 (MQSNSLLKPR…DQLSVFADLE (231 aa)) form an alpha N-terminal domain (alpha-NTD) region. Residues 245 to 326 (IDPVLLRPVD…WPPAGLEKLG (82 aa)) form an alpha C-terminal domain (alpha-CTD) region.

Belongs to the RNA polymerase alpha chain family. Homodimer. The RNAP catalytic core consists of 2 alpha, 1 beta, 1 beta' and 1 omega subunit. When a sigma factor is associated with the core the holoenzyme is formed, which can initiate transcription.

It carries out the reaction RNA(n) + a ribonucleoside 5'-triphosphate = RNA(n+1) + diphosphate. Its function is as follows. DNA-dependent RNA polymerase catalyzes the transcription of DNA into RNA using the four ribonucleoside triphosphates as substrates. This chain is DNA-directed RNA polymerase subunit alpha, found in Aromatoleum aromaticum (strain DSM 19018 / LMG 30748 / EbN1) (Azoarcus sp. (strain EbN1)).